The following is a 1118-amino-acid chain: Error-prone DNA polymerase (1118 aa).

Positions 1071–1118 (GPQPMGYAKEVGSDRRSRPEIGNAPARQDLATLSEEAEQVMPKGRNFQ) are disordered.

Belongs to the DNA polymerase type-C family. DnaE2 subfamily.

Its subcellular location is the cytoplasm. The catalysed reaction is DNA(n) + a 2'-deoxyribonucleoside 5'-triphosphate = DNA(n+1) + diphosphate. DNA polymerase involved in damage-induced mutagenesis and translesion synthesis (TLS). It is not the major replicative DNA polymerase. In Mesorhizobium japonicum (strain LMG 29417 / CECT 9101 / MAFF 303099) (Mesorhizobium loti (strain MAFF 303099)), this protein is Error-prone DNA polymerase.